The chain runs to 2190 residues: Voltage-dependent L-type calcium channel subunit alpha-1D (2190 aa).

Residues 1-10 (MQHHQQQQPE) show a composition bias toward low complexity. 2 disordered regions span residues 1-44 (MQHH…SKQT) and 57-96 (QAKA…SNSR). The Cytoplasmic segment spans residues 1-121 (MQHHQQQQPE…RACISLVEWK (121 aa)). Composition is skewed to polar residues over residues 31 to 44 (PTTQ…SKQT) and 63 to 76 (NMNT…GSLS). Positions 77–88 (QRKRQQYAKSKK) are enriched in basic residues. The I repeat unit spans residues 108-404 (NPIRRACISL…LVLGVLSGEF (297 aa)). Residues 122 to 140 (PFDIFILLSIFANCVALAV) form a helical membrane-spanning segment. Over 141–158 (YIPFPEDDSNSTNHNLEK) the chain is Extracellular. N150 is a glycosylation site (N-linked (GlcNAc...) asparagine). A helical membrane pass occupies residues 159-178 (VEYAFLIIFTVETFLKIIAY). At 179–190 (GLLLHPNAYVRN) the chain is on the cytoplasmic side. The helical transmembrane segment at 191–209 (GWNLLDFVIVVVGLFSVIL) threads the bilayer. Topologically, residues 210-230 (EQLTKETEGGSHSGGKPGGFD) are extracellular. The chain crosses the membrane as a helical span at residues 231–249 (VKALRAFRVLRPLRLVSGV). At 250–268 (PSLQVVLNSIIKAMVPLLH) the chain is on the cytoplasmic side. Residues 269–288 (IALLVLFVIIIYAIIGLELF) form a helical membrane-spanning segment. At 289-376 (IGKMHKSCFL…WVNDAIGCEW (88 aa)) the chain is on the extracellular side. N324 carries an N-linked (GlcNAc...) asparagine glycan. E359 is a Ca(2+) binding site. Residues 377–401 (PWIYFVSLIILGSFFVLNLVLGVLS) form a helical membrane-spanning segment. Over 402 to 544 (GEFSKEREKA…RKCRAAVKSV (143 aa)) the chain is Cytoplasmic. A binding to the beta subunit region spans residues 424–441 (QQLEEDLKGYLDWITQAE). Positions 478–500 (GRSSNKHASMPTSETESVNTENV) are disordered. One copy of the II repeat lies at 530–776 (NRFNRRKCRA…VFLAIAVDNL (247 aa)). The helical transmembrane segment at 545–564 (TFYWLVIVLVFLNTLTISSE) threads the bilayer. Residues 565-579 (HYNQPDWLTQIQDIA) lie on the Extracellular side of the membrane. A helical membrane pass occupies residues 580–598 (NKVLLALFTCEMLVKMYSL). Over 599-606 (GLQAYFVS) the chain is Cytoplasmic. A helical membrane pass occupies residues 607–625 (LFNRFDCFVVCGGIVETIL). Topologically, residues 626–635 (VELEIMSPLG) are extracellular. The chain crosses the membrane as a helical span at residues 636-654 (ISVFRCVRLLRIFKVTRHW). Residues 655–673 (ASLSNLVASLLNSMKSIAS) are Cytoplasmic-facing. A helical transmembrane segment spans residues 674 to 694 (LLLLLFLFIIIFSLLGMQLFG). The Extracellular portion of the chain corresponds to 695–748 (GKFNFDETQTKRSTFDNFPQALLTVFQILTGEDWNAVMYDGIMAYGGPSSSGMI). E726 is a Ca(2+) binding site. A helical membrane pass occupies residues 749-773 (VCIYFIILFICGNYILLNVFLAIAV). At 774 to 907 (DNLADAESLN…VGCHRLINHH (134 aa)) the chain is on the cytoplasmic side. The span at 787 to 823 (KEEAEEKERKKNARKESLENKKSEKSEGDQKKPKDSK) shows a compositional bias: basic and acidic residues. The segment at 787–869 (KEEAEEKERK…VPAGPRPRRI (83 aa)) is disordered. Residues 847–859 (VGEDEEDEEDEPE) are compositionally biased toward acidic residues. The stretch at 894 to 1176 (NPIRVGCHRL…IFVGFVIVTF (283 aa)) is one III repeat. A helical membrane pass occupies residues 908 to 926 (IFTNLILVFIMLSSVSLAA). The Extracellular segment spans residues 927–942 (EDPIRSHSFRNNILGY). A helical membrane pass occupies residues 943-962 (ADYVFTSMFTFEIILKMTAF). At 963 to 974 (GAFLHKGSFCRN) the chain is on the cytoplasmic side. The helical transmembrane segment at 975-993 (YFNLLDLLVVGVSLVSFGI) threads the bilayer. Topologically, residues 994-999 (QSSAIS) are extracellular. The helical transmembrane segment at 1000–1019 (VVKILRVLRVLRPLRAINRA) threads the bilayer. At 1020–1038 (KGLKHVVQCVFVAIRTIGN) the chain is on the cytoplasmic side. A helical membrane pass occupies residues 1039–1058 (IMIVTTLLQFMFACIGVQLF). At 1059-1148 (KGKFYKCTDE…VGPVYNYRVE (90 aa)) the chain is on the extracellular side. Residues 1096-1186 (RVWQNSDFNF…QEQGEQEYKN (91 aa)) form a dihydropyridine binding region. Residue E1122 participates in Ca(2+) binding. A helical membrane pass occupies residues 1149 to 1169 (ISIFFIIYIIIIAFFMMNIFV). The Cytoplasmic portion of the chain corresponds to 1170 to 1226 (GFVIVTFQEQGEQEYKNCELDKNQRQCVEYALKARPLRRYIPKNPYQYKFWYVVNST). One copy of the IV repeat lies at 1213-1496 (NPYQYKFWYV…LFVAVIMDNF (284 aa)). A helical membrane pass occupies residues 1227-1245 (GFEYIMFVLIMLNTLCLAM). The Extracellular segment spans residues 1246 to 1260 (QHYGQSKLFNDAMDI). The chain crosses the membrane as a helical span at residues 1261-1280 (MNMVFTGVFTVEMVLKLIAF). Topologically, residues 1281 to 1297 (KPKIFVRKKERWLGYFS) are cytoplasmic. The helical transmembrane segment at 1298 to 1319 (DAWNTFDSLIVIGSIVDVVLSE) threads the bilayer. The Extracellular segment spans residues 1320-1342 (ADPKPTETVTTDESGNSEDSARI). Residues 1343 to 1362 (SITFFRLFRVMRLVKLLSRG) form a helical membrane-spanning segment. Topologically, residues 1363–1381 (EGIRTLLWTFIKSFQALPY) are cytoplasmic. The helical transmembrane segment at 1382-1401 (VALLIAMLFFIYAVIGMQVF) threads the bilayer. Residues 1402–1468 (GKVAMRDNNQ…GEEYTCGSNF (67 aa)) lie on the Extracellular side of the membrane. The interval 1449–1515 (RCDPESDYNP…LGPHHLDEFK (67 aa)) is dihydropyridine binding. A phenylalkylamine binding region spans residues 1461–1504 (EYTCGSNFAIIYFISFYMLCAFLIINLFVAVIMDNFDYLTRDWS). A helical transmembrane segment spans residues 1469-1493 (AIIYFISFYMLCAFLIINLFVAVIM). Over 1494-2190 (DNFDYLTRDW…ADEMICITSL (697 aa)) the chain is Cytoplasmic. Disordered regions lie at residues 1736–1787 (THRP…NANL), 1803–1833 (FGSH…SRRT), 1917–1952 (HGFF…RSSF), and 1995–2025 (SSKA…HTPY). Positions 1805–1823 (SHEHRSENGYHSYSRADHE) are enriched in basic and acidic residues. Over residues 1824–1833 (KRRRPSSRRT) the composition is skewed to basic residues.

The protein belongs to the calcium channel alpha-1 subunit (TC 1.A.1.11) family. CACNA1D subfamily. Voltage-dependent calcium channels are multisubunit complexes, consisting of alpha-1, alpha-2, beta and delta subunits in a 1:1:1:1 ratio. The channel activity is directed by the pore-forming and voltage-sensitive alpha-1 subunit. In many cases, this subunit is sufficient to generate voltage-sensitive calcium channel activity. The auxiliary subunits beta and alpha-2/delta linked by a disulfide bridge regulate the channel activity. Interacts with RIMBP2. Expressed in the basilar papilla of the cochlea.

Its subcellular location is the membrane. It carries out the reaction Ca(2+)(in) = Ca(2+)(out). Functionally, the isoform alpha-1D gives rise to L-type calcium currents. Long-lasting (L-type) calcium channels belong to the 'high-voltage activated' (HVA) group. This Gallus gallus (Chicken) protein is Voltage-dependent L-type calcium channel subunit alpha-1D (CACNA1D).